A 38-amino-acid chain; its full sequence is Large ribosomal subunit protein bL36 (38 aa).

This sequence belongs to the bacterial ribosomal protein bL36 family.

The protein is Large ribosomal subunit protein bL36 of Phytoplasma australiense.